A 98-amino-acid polypeptide reads, in one-letter code: Co-chaperonin GroES (98 aa).

The interval 35–57 (EKPQEGKVISAGPGRVDDKGTRV) is disordered.

Belongs to the GroES chaperonin family. Heptamer of 7 subunits arranged in a ring. Interacts with the chaperonin GroEL.

It localises to the cytoplasm. Together with the chaperonin GroEL, plays an essential role in assisting protein folding. The GroEL-GroES system forms a nano-cage that allows encapsulation of the non-native substrate proteins and provides a physical environment optimized to promote and accelerate protein folding. GroES binds to the apical surface of the GroEL ring, thereby capping the opening of the GroEL channel. The polypeptide is Co-chaperonin GroES (Cutibacterium acnes (strain DSM 16379 / KPA171202) (Propionibacterium acnes)).